A 137-amino-acid chain; its full sequence is Large ribosomal subunit protein uL13 (137 aa).

Belongs to the universal ribosomal protein uL13 family. In terms of assembly, part of the 50S ribosomal subunit.

Functionally, this protein is one of the early assembly proteins of the 50S ribosomal subunit, although it is not seen to bind rRNA by itself. It is important during the early stages of 50S assembly. The polypeptide is Large ribosomal subunit protein uL13 (Methanocaldococcus jannaschii (strain ATCC 43067 / DSM 2661 / JAL-1 / JCM 10045 / NBRC 100440) (Methanococcus jannaschii)).